We begin with the raw amino-acid sequence, 696 residues long: DNA-directed RNA polymerase subunit beta' (696 aa).

Zn(2+)-binding residues include C76, C78, C94, and C97. Mg(2+) contacts are provided by D496, D498, and D500.

Belongs to the RNA polymerase beta' chain family. RpoC1 subfamily. As to quaternary structure, in plastids the minimal PEP RNA polymerase catalytic core is composed of four subunits: alpha, beta, beta', and beta''. When a (nuclear-encoded) sigma factor is associated with the core the holoenzyme is formed, which can initiate transcription. Requires Mg(2+) as cofactor. It depends on Zn(2+) as a cofactor.

The protein resides in the plastid. The protein localises to the chloroplast. It catalyses the reaction RNA(n) + a ribonucleoside 5'-triphosphate = RNA(n+1) + diphosphate. In terms of biological role, DNA-dependent RNA polymerase catalyzes the transcription of DNA into RNA using the four ribonucleoside triphosphates as substrates. This Guizotia abyssinica (Niger) protein is DNA-directed RNA polymerase subunit beta'.